The primary structure comprises 85 residues: Probable [Fe-S]-dependent transcriptional repressor (85 aa).

Iron-sulfur cluster-binding residues include Cys56, Cys61, Cys64, and Cys71.

This sequence belongs to the FeoC family.

Functionally, may function as a transcriptional regulator that controls feoABC expression. In Yersinia pseudotuberculosis serotype O:1b (strain IP 31758), this protein is Probable [Fe-S]-dependent transcriptional repressor.